The chain runs to 392 residues: Formate-dependent phosphoribosylglycinamide formyltransferase (392 aa).

N(1)-(5-phospho-beta-D-ribosyl)glycinamide is bound by residues E22–L23 and E82. ATP contacts are provided by residues R114, K155, S160–Q165, E195–V198, and E203. Residues R119–L308 enclose the ATP-grasp domain. Mg(2+) is bound by residues E267 and E279. Residues D286, K355, and R362 to R363 each bind N(1)-(5-phospho-beta-D-ribosyl)glycinamide.

This sequence belongs to the PurK/PurT family. Homodimer.

The enzyme catalyses N(1)-(5-phospho-beta-D-ribosyl)glycinamide + formate + ATP = N(2)-formyl-N(1)-(5-phospho-beta-D-ribosyl)glycinamide + ADP + phosphate + H(+). It functions in the pathway purine metabolism; IMP biosynthesis via de novo pathway; N(2)-formyl-N(1)-(5-phospho-D-ribosyl)glycinamide from N(1)-(5-phospho-D-ribosyl)glycinamide (formate route): step 1/1. Functionally, involved in the de novo purine biosynthesis. Catalyzes the transfer of formate to 5-phospho-ribosyl-glycinamide (GAR), producing 5-phospho-ribosyl-N-formylglycinamide (FGAR). Formate is provided by PurU via hydrolysis of 10-formyl-tetrahydrofolate. This Shigella sonnei (strain Ss046) protein is Formate-dependent phosphoribosylglycinamide formyltransferase.